Consider the following 184-residue polypeptide: Type-1 fimbrial protein, A chain (184 aa).

A signal peptide spans 1 to 22 (MKHKLMTSTIASLMFVAGAAVA). A disulfide bridge links Cys-46 with Cys-86.

It belongs to the fimbrial protein family.

The protein resides in the fimbrium. Functionally, fimbriae (also called pili), polar filaments radiating from the surface of the bacterium to a length of 0.5-1.5 micrometers and numbering 100-300 per cell, enable bacteria to colonize the epithelium of specific host organs. This chain is Type-1 fimbrial protein, A chain (fimA), found in Salmonella typhi.